The chain runs to 211 residues: Protein Nef (211 aa).

Residue glycine 2 is the site of N-myristoyl glycine; by host attachment. The residue at position 6 (serine 6) is a Phosphoserine; by host. Positions 67–70 (EDEE) are acidic; interacts with host PACS1 and PACS2; stabilizes the interaction of NEF/MHC-I with host AP1M1; necessary for MHC-I internalization. Residues 74-83 (PVRPQVPLRP) form an SH3-binding; interaction with Src family tyrosine kinases region. Positions 77 to 80 (PQVP) match the PxxP; stabilizes the interaction of NEF/MHC-I with host AP1M1; necessary for MHC-I internalization motif. A mediates dimerization, Nef-PTE1 interaction region spans residues 113–129 (DILDLWVYHTQGYFPDW). The interval 153–185 (MDPDQVEEANEGENNSLLHPISLHGMDDPEKEV) is binding to ATP6V1H. The Dileucine internalization motif; necessary for CD4 internalization motif lies at 169–170 (LL). Residues 179 to 180 (DD) carry the Diacidic; necessary for CD4 internalization motif.

This sequence belongs to the lentivirus primate group Nef protein family. As to quaternary structure, monomer; cytosolic form. Homodimer; membrane bound form. Interacts with Nef associated p21-activated kinase (PAK2); this interaction activates PAK2. Associates with the Nef-MHC-I-AP1 complex; this complex is required for MHC-I internalization. Interacts (via C-terminus) with host PI3-kinase. Interacts with host PACS1; this interaction seems to be weak. Interacts with host PACS2. Interacts with host LCK and MAPK3; these interactions inhibit the kinase activity of the latter. Interacts with host ATP6V1H; this interaction may play a role in CD4 endocytosis. Associates with the CD4-Nef-AP2 complex; this complex is required for CD4 internalization. Interacts with host AP2 subunit alpha and AP2 subunit sigma2. Interacts with TCR-zeta chain; this interaction up-regulates the Fas ligand (FasL) surface expression. Interacts with host HCK, LYN, and SRC; these interactions activate the Src family kinases. Interacts with MAP3K5; this interaction inhibits the Fas and TNFR-mediated death signals. Interacts with beta-COP and PTE1. Interacts with human RACK1; this increases Nef phosphorylation by PKC. Interacts with TP53; this interaction decreases the half-life of TP53, protecting the infected cell against p53-mediated apoptosis. The virion-associated Nef proteins are cleaved by the viral protease to release the soluble C-terminal core protein. Nef is probably cleaved concomitantly with viral structural proteins on maturation of virus particles. In terms of processing, myristoylated. Post-translationally, phosphorylated on serine residues, probably by host PKCdelta and theta.

It is found in the host cell membrane. The protein resides in the virion. The protein localises to the secreted. Its subcellular location is the host Golgi apparatus membrane. Functionally, factor of infectivity and pathogenicity, required for optimal virus replication. Alters numerous pathways of T-lymphocyte function and down-regulates immunity surface molecules in order to evade host defense and increase viral infectivity. Alters the functionality of other immunity cells, like dendritic cells, monocytes/macrophages and NK cells. Its function is as follows. In infected CD4(+) T-lymphocytes, down-regulates the surface MHC-I, mature MHC-II, CD4, CD28, CCR5 and CXCR4 molecules. Mediates internalization and degradation of host CD4 through the interaction of with the cytoplasmic tail of CD4, the recruitment of AP-2 (clathrin adapter protein complex 2), internalization through clathrin coated pits, and subsequent transport to endosomes and lysosomes for degradation. Diverts host MHC-I molecules to the trans-Golgi network-associated endosomal compartments by an endocytic pathway to finally target them for degradation. MHC-I down-regulation may involve AP-1 (clathrin adapter protein complex 1) or possibly Src family kinase-ZAP70/Syk-PI3K cascade recruited by PACS2. In consequence infected cells are masked for immune recognition by cytotoxic T-lymphocytes. Decreasing the number of immune receptors also prevents reinfection by more HIV particles (superinfection). Down-regulates host SERINC3 and SERINC5 thereby excluding these proteins from the viral particles. Virion infectivity is drastically higher when SERINC3 or SERINC5 are excluded from the viral envelope, because these host antiviral proteins impair the membrane fusion event necessary for subsequent virion penetration. Bypasses host T-cell signaling by inducing a transcriptional program nearly identical to that of anti-CD3 cell activation. Interaction with TCR-zeta chain up-regulates the Fas ligand (FasL). Increasing surface FasL molecules and decreasing surface MHC-I molecules on infected CD4(+) cells send attacking cytotoxic CD8+ T-lymphocytes into apoptosis. In terms of biological role, plays a role in optimizing the host cell environment for viral replication without causing cell death by apoptosis. Protects the infected cells from apoptosis in order to keep them alive until the next virus generation is ready to strike. Inhibits the Fas and TNFR-mediated death signals by blocking MAP3K5/ASK1. Decreases the half-life of TP53, protecting the infected cell against p53-mediated apoptosis. Inhibits the apoptotic signals regulated by the Bcl-2 family proteins through the formation of a Nef/PI3-kinase/PAK2 complex that leads to activation of PAK2 and induces phosphorylation of host BAD. Functionally, extracellular Nef protein targets CD4(+) T-lymphocytes for apoptosis by interacting with CXCR4 surface receptors. This chain is Protein Nef, found in Homo sapiens (Human).